Reading from the N-terminus, the 114-residue chain is rRNA-processing protein cgrA (114 aa).

A disordered region spans residues 1-96 (MSASESAPSA…YDKMAEKMHR (96 aa)). A coiled-coil region spans residues 40–101 (AKRLEARKHQ…EKMHRKRVER (62 aa)). Over residues 41–93 (KRLEARKHQEAVKEHERELKEEKEAERQAHIQRIKDRRAAKEEKERYDKMAEK) the composition is skewed to basic and acidic residues.

The protein belongs to the CGR1 family.

It localises to the nucleus. The protein resides in the nucleolus. In terms of biological role, involved in nucleolar integrity and required for processing of the pre-rRNA for the 60S ribosome subunit. The polypeptide is rRNA-processing protein cgrA (cgrA) (Aspergillus terreus (strain NIH 2624 / FGSC A1156)).